Here is a 431-residue protein sequence, read N- to C-terminus: Glutamate-1-semialdehyde 2,1-aminomutase (431 aa).

An N6-(pyridoxal phosphate)lysine modification is found at lysine 265.

This sequence belongs to the class-III pyridoxal-phosphate-dependent aminotransferase family. HemL subfamily. As to quaternary structure, homodimer. Pyridoxal 5'-phosphate serves as cofactor.

The protein resides in the cytoplasm. It carries out the reaction (S)-4-amino-5-oxopentanoate = 5-aminolevulinate. Its pathway is porphyrin-containing compound metabolism; protoporphyrin-IX biosynthesis; 5-aminolevulinate from L-glutamyl-tRNA(Glu): step 2/2. The protein is Glutamate-1-semialdehyde 2,1-aminomutase of Aliivibrio salmonicida (strain LFI1238) (Vibrio salmonicida (strain LFI1238)).